The following is a 1340-amino-acid chain: MHRDMYSSRGTGYGQQQYGSQSGYSQNLGSGYPGSSVSGGAEGGSQISLSSRHPSITGAPQETDIGGGYRSHLSTAASHYGTQYGSVYGSTSLSSSQPLSTNGLGSSVLDNRSGYVPTLPDSPKFASGSYLSPSSHGYGQKTDDLYSDKLSGYIPVDRRQYGEQSSSYLGRELQNEPTRRYADPSNFARQTDLYDRIDQASLLRGEQLLKMQSLHTSSVDAGVNRQTDYLTERSSTVRHSDQEAMHYGGRLESDPHGLSVRNTSSYASQHTPSLLGAVPRRNLDDYIYPESSSNPGYGVSLPPGRDYGTGKGIHSAASLDLDYPGGMLARGTGAAPRVDDLRKGDRASYLREFDLREEERRREDQRARDKEREREREREHDRERERQRERERQRARDRERERILERREKERQGERERERKRALEIKRDRTPTARATSKDTKERTPVPKSISRDARSSSLRRDAHHREASIRRSSPIKPIRRDYVCKVLSSRLVDMERDYVTLDKRYPRLFVPSEFSKVVVNWPKQKLTLSMHTAVSFEHDYIEDGGADVKSTSTKPLALKTGGKSVWNAKMVLMSGLSRTALEDLASDKFFEDRIPHICNILKFAVLKKDHSFMAIGGSWDPTDGMDPSVDQSSLIQTMLRHSKDKLHLDLSNCRHWNPFLEIHYDRVGTDGVFSYKEITVLFVPDLSECLPSFDVWRTQWLAHRKALTERDRLLSQEVKKDTVEVTKDAEKKSPGDTSGTPTTGTKKTVKKIIKRVVKRPVNDGKATGMKGEKSDVPEHVAIPETTVPKEESTGTSSNKKIVKKVAETGDTSDPSAKANEQTPAKTIVKKKIIKRVAKRKVAEIDNKMDGDSKKDGDSDEKKVMEVGKKSSDSGSVEMKPTAESLEDVKDENASKTVDVKQETGSPDTKKKEGASSSSKKDTKTGEDKKAEKKNNSETMSEGKKIDRNNTDEKEVKEKVTEKEIKERGGKDESRIQVKDRKKCEEPPRAGFILQTKRNKDSKLRSLSASLDSLLDYTDKDLDESSFEISLFAESLYEMLQYQMGSRIFEFLKKLRVKIVRQRNQRKRHQEELSVKQNEAKSQDKRQKTAEHEDKEASVISESAPGKDDKETSGKETVDGSREIADKEAVAKTKETLGSKEVTVGEAVNMEVENQDEEDDDGDDDPEEDPEEDPEEDPEEDPEEDPEECEEMDVANTEQEEPAEEPQKKEENLEKTSGTVADPITEAETDNRKEERGPNDSKTEIKPKSETEKHGKQDGGTSDAAKREETVDKELLQAFRFFDRNQAGYVRVEDMRVTIHSLGKFLSHREVKELVQSALLESNTGRDDRILYNKLVRLSL.

Disordered stretches follow at residues 1–73, 161–185, 357–473, 723–750, 784–990, and 1063–1269; these read MHRD…RSHL, YGEQ…ADPS, EEER…IRRS, TVEV…KKTV, PETT…PPRA, and RNQR…KREE. Over residues 7-39 the composition is skewed to low complexity; that stretch reads SSRGTGYGQQQYGSQSGYSQNLGSGYPGSSVSG. A compositionally biased stretch (polar residues) spans 46-60; that stretch reads QISLSSRHPSITGAP. 3 stretches are compositionally biased toward basic and acidic residues: residues 173–182, 357–470, and 723–735; these read LQNEPTRRYA, EEER…EASI, and TVEV…KKSP. Residues 355–426 adopt a coiled-coil conformation; that stretch reads LREEERRRED…RERKRALEIK (72 aa). Residues 810–824 are compositionally biased toward polar residues; that stretch reads GDTSDPSAKANEQTP. The span at 828-840 shows a compositional bias: basic residues; that stretch reads IVKKKIIKRVAKR. 4 stretches are compositionally biased toward basic and acidic residues: residues 841–872, 887–988, 1069–1097, and 1105–1138; these read KVAE…KKSS, EDVK…EEPP, HQEE…DKEA, and PGKD…ETLG. The stretch at 1052–1086 forms a coiled coil; it reads LKKLRVKIVRQRNQRKRHQEELSVKQNEAKSQDKR. Residues 1153 to 1204 show a composition bias toward acidic residues; it reads ENQDEEDDDGDDDPEEDPEEDPEEDPEEDPEEDPEECEEMDVANTEQEEPAE. 2 stretches are compositionally biased toward basic and acidic residues: residues 1205 to 1214 and 1229 to 1257; these read EPQKKEENLE and TDNR…HGKQ. The EF-hand domain maps to 1270–1305; that stretch reads TVDKELLQAFRFFDRNQAGYVRVEDMRVTIHSLGKF.

As to quaternary structure, interacts with BHLH148/RITF1. In terms of tissue distribution, expressed ubiquitously at high levels, including in guard cells.

It localises to the nucleus. Functionally, required for salt tolerance and sodium (Na) homeostasis after salt stress. Together with BHLH148/RITF1, regulates the transcription of several genes involved in the detoxification of reactive oxygen species (ROS) generated by salt (NaCl) stress. Binds calcium. The sequence is that of Protein SHORT ROOT IN SALT MEDIUM 1 from Arabidopsis thaliana (Mouse-ear cress).